The primary structure comprises 51 residues: Small ribosomal subunit protein eS31 (51 aa).

Zn(2+) is bound by residues C21, C24, C39, and C42. The segment at 21–42 (CPRCGPGVFLAEHEDRFSCGRC) adopts a C4-type zinc-finger fold.

It belongs to the eukaryotic ribosomal protein eS31 family. In terms of assembly, part of the 30S ribosomal subunit. Zn(2+) is required as a cofactor.

This Picrophilus torridus (strain ATCC 700027 / DSM 9790 / JCM 10055 / NBRC 100828 / KAW 2/3) protein is Small ribosomal subunit protein eS31.